The sequence spans 181 residues: Oligoribonuclease (181 aa).

Residues 8 to 171 (LIWIDLEMTG…QDIQESIAEL (164 aa)) enclose the Exonuclease domain. The active site involves Y129.

The protein belongs to the oligoribonuclease family.

The protein localises to the cytoplasm. In terms of biological role, 3'-to-5' exoribonuclease specific for small oligoribonucleotides. The chain is Oligoribonuclease from Shewanella baltica (strain OS155 / ATCC BAA-1091).